Reading from the N-terminus, the 272-residue chain is Troponin T, fast skeletal muscle (272 aa).

Residues 1-50 show a composition bias toward acidic residues; it reads MSDEETEQVEEQYEEEEEAQEEEVQEEAPEPEEVQEDAVAEEEREEDEEE. Positions 1–75 are disordered; sequence MSDEETEQVE…EKVDFDDIQK (75 aa). Position 2 is an N-acetylserine (serine 2). Position 2 is a phosphoserine (serine 2). Residues 63–75 are compositionally biased toward basic and acidic residues; that stretch reads PEGEKVDFDDIQK. Residue serine 91 is modified to Phosphoserine. The segment covering 114 to 156 has biased composition (basic and acidic residues); the sequence is RAERAEQQRIRAEKEREPQNRLAEEKARREEEDAKRRAEDDMK. The tract at residues 114–193 is disordered; it reads RAERAEQQRI…TAREMKKKIL (80 aa). 3 positions are modified to phosphoserine: serine 162, serine 169, and serine 170. A compositionally biased stretch (basic and acidic residues) spans 184-193; sequence TAREMKKKIL. Serine 206 is modified (phosphoserine). Tyrosine 222 bears the Phosphotyrosine mark. The disordered stretch occupies residues 248 to 272; the sequence is RIDQAQKHSKKAGATAKGKVGGRWK.

The protein belongs to the troponin T family. As to expression, expressed predominantly in skeletal muscle.

Troponin T is the tropomyosin-binding subunit of troponin, the thin filament regulatory complex which confers calcium-sensitivity to striated muscle actomyosin ATPase activity. This is Troponin T, fast skeletal muscle (Tnnt3) from Mus musculus (Mouse).